The sequence spans 302 residues: Meiotically up-regulated gene 129 protein (302 aa).

Functionally, has a role in meiosis. The protein is Meiotically up-regulated gene 129 protein (mug129) of Schizosaccharomyces pombe (strain 972 / ATCC 24843) (Fission yeast).